We begin with the raw amino-acid sequence, 198 residues long: uncharacterized protein (198 aa).

The interval 166 to 198 (GYEPDEKARKKRERVKRSEVEDQLKINVKPTRR) is disordered.

This is an uncharacterized protein from Coxiella burnetii (strain RSA 493 / Nine Mile phase I).